A 1086-amino-acid chain; its full sequence is Formin-like protein 2 (1086 aa).

The N-myristoyl glycine moiety is linked to residue G2. Positions 23–469 constitute a GBD/FH3 domain; it reads LPMPEPGELE…EAIQRQSTLE (447 aa). The residue at position 188 (S188) is a Phosphoserine. A disordered region spans residues 513–597; the sequence is SVGPTMGAAS…APPLPSAPPL (85 aa). The span at 525–537 shows a compositional bias: pro residues; that stretch reads PLPPPPPPLPPSS. Polar residues predominate over residues 538–547; the sequence is DTPETVQNGP. Pro residues-rich tracts occupy residues 548–576 and 583–597; these read VTPP…PLPG and PAPP…APPL. Residues 616–1007 form the FH2 domain; sequence IKKPIKTKFR…LMEKLLEQEA (392 aa). In terms of domain architecture, DAD spans 1040–1079; the sequence is NRHVYEGKDGAIEDIITVLKTVPFTARTAKRGSRFFCEPV.

The protein belongs to the formin homology family.

It is found in the cytoplasm. Functionally, plays a role in the regulation of cell morphology and cytoskeletal organization. Required in the cortical actin filament dynamics. In Homo sapiens (Human), this protein is Formin-like protein 2.